The primary structure comprises 63 residues: Hyphancin-3G (63 aa).

A signal peptide spans 1-22; sequence MNFSRILFFMFACFVALASVSA. Residues 23–26 constitute a propeptide, removed by a dipeptidylpeptidase; sequence VPEP. The residue at position 61 (Leu-61) is a Leucine amide.

The protein belongs to the cecropin family.

It is found in the secreted. Has antibacterial activity. The polypeptide is Hyphancin-3G (Hyphantria cunea (Fall webworm moth)).